Here is a 168-residue protein sequence, read N- to C-terminus: Transcription antitermination protein NusB (168 aa).

Belongs to the NusB family.

Involved in transcription antitermination. Required for transcription of ribosomal RNA (rRNA) genes. Binds specifically to the boxA antiterminator sequence of the ribosomal RNA (rrn) operons. This chain is Transcription antitermination protein NusB, found in Chlamydia trachomatis serovar L2 (strain ATCC VR-902B / DSM 19102 / 434/Bu).